The chain runs to 611 residues: Adenosylhomocysteinase 3 (611 aa).

Low complexity-rich tracts occupy residues 1–14 (MSVQVVSAAAAAKV), 40–57 (AMAPPAGGGDPEAPAPAA), and 68–78 (GPAAALSPAAG). Positions 1-184 (MSVQVVSAAA…KQQKNSKGNS (184 aa)) are disordered. Ser-2 is modified (N-acetylserine). The tract at residues 2-109 (SVQVVSAAAA…DGGEALVSPD (108 aa)) is LISN domain, inhibits interaction with ITPR1. Residue Ser-107 is modified to Phosphoserine. The segment covering 135-144 (RPTKIGRRSL) has biased composition (basic residues). Low complexity predominate over residues 145-164 (SRSISQSSTDSYSSAASYTD). Ser-149, Ser-152, Ser-155, and Ser-158 each carry phosphoserine. 3 residues coordinate substrate: Thr-236, Asp-310, and Glu-335. NAD(+) is bound at residue 336 to 338 (SVT). Substrate contacts are provided by Lys-365 and Asp-369. Residues Asn-370, 401-406 (GEVGKG), Glu-422, Asn-457, 478-479 (MG), and Asn-525 contribute to the NAD(+) site.

Belongs to the adenosylhomocysteinase family. In terms of assembly, homotetramer. Forms heteromultimers with AHCYL1 (via the C-terminal region). Interacts with ITPR1; with lower affinity than AHCYL1 and maybe via ITPR1. Interacts with SLC4A4. Interacts with ZCCHC4. It depends on NAD(+) as a cofactor. Phosphorylated during neuronal differentiation at the LISN domain. In terms of tissue distribution, expressed in parotid and acinar cells (at protein level).

The protein resides in the cytoplasm. The protein localises to the microsome. The enzyme catalyses S-adenosyl-L-homocysteine + H2O = L-homocysteine + adenosine. The protein operates within amino-acid biosynthesis; L-homocysteine biosynthesis; L-homocysteine from S-adenosyl-L-homocysteine: step 1/1. Functionally, may regulate the electrogenic sodium/bicarbonate cotransporter SLC4A4 activity and Mg(2+)-sensitivity. On the contrary of its homolog AHCYL1, does not regulate ITPR1 sensitivity to inositol 1,4,5-trisphosphate. The protein is Adenosylhomocysteinase 3 of Bos taurus (Bovine).